We begin with the raw amino-acid sequence, 201 residues long: Peroxiredoxin-2F, mitochondrial (201 aa).

Residues 1 to 30 (MAMSILKLRNLSALRSAANSARIGVSSRGF) constitute a mitochondrion transit peptide. Thr-37 bears the Phosphothreonine mark. Positions 37–201 (TDITSAAPGV…TGAEVILGQI (165 aa)) constitute a Thioredoxin domain. Cys-89 serves as the catalytic Cysteine sulfenic acid (-SOH) intermediate. Ser-149 is modified (phosphoserine).

Belongs to the peroxiredoxin family. Prx5 subfamily. Monomer. As to expression, expressed in the whole plant.

It localises to the mitochondrion matrix. The enzyme catalyses [glutaredoxin]-dithiol + a hydroperoxide = [glutaredoxin]-disulfide + an alcohol + H2O. Functionally, thiol-specific peroxidase that catalyzes the reduction of hydrogen peroxide and organic hydroperoxides to water and alcohols, respectively. Plays a role in cell protection against oxidative stress by detoxifying peroxides. Reduces preferentially hydrogen peroxide rather than alkyl peroxides. May be involved in mitochondrial redox homeostasis. The protein is Peroxiredoxin-2F, mitochondrial (PRXIIF) of Arabidopsis thaliana (Mouse-ear cress).